The sequence spans 163 residues: Large ribosomal subunit protein uL10 (163 aa).

The protein belongs to the universal ribosomal protein uL10 family. As to quaternary structure, part of the ribosomal stalk of the 50S ribosomal subunit. The N-terminus interacts with L11 and the large rRNA to form the base of the stalk. The C-terminus forms an elongated spine to which L12 dimers bind in a sequential fashion forming a multimeric L10(L12)X complex.

Functionally, forms part of the ribosomal stalk, playing a central role in the interaction of the ribosome with GTP-bound translation factors. The protein is Large ribosomal subunit protein uL10 (rplJ) of Pasteurella multocida (strain Pm70).